The sequence spans 79 residues: Small ribosomal subunit protein bS21 (79 aa).

Positions 59-79 (RKKMQREGLLPMKPKPVVGVR) are disordered.

Belongs to the bacterial ribosomal protein bS21 family.

The protein is Small ribosomal subunit protein bS21 of Methylocella silvestris (strain DSM 15510 / CIP 108128 / LMG 27833 / NCIMB 13906 / BL2).